We begin with the raw amino-acid sequence, 526 residues long: MSFLQEVGKRRTFAIISHPDAGKTTITEKVLLFGNAIQKAGTVKGRGSNQHAKSDWMEMEKERGISVTTSVMQFPFNDCLVNLLDTPGHEDFSEDTYRTLTAVDSCLMVIDAAKGVEDRTRKLMEVTRLRDTPIVTFMNKLDREVRDPMEVLDEVESELGMACAPISWPIGCGKEFKGVYHIHRDETILYESGHGHEIQEVRTIKGLDNPELDATVGADLAESVREELELVMGACPEFDHELFLAGELTPVYFGTALGNFGVDHMLEGLTDWAPAPQTRQANERDVVATEDKFSGFVFKIQANMDPKHRDRIAFMRIVSGTYTQGMKMNHVRTGKNVSISDAVTFMAGDRSRAETAYAGDIIGLHNHGTIQIGDTFTQGESLKFSGIPNFAPELFRRIRLKDPLKQKQLLKGLVQLSEEGAVQVFRPLQNNDLIVGAVGVLQFDVVVARLKAEYNVEAIYEGVSVATARWVDCADGKKMDEFQRKNQANLALDGGDNLTYIAPTMVNLNLASERFPDVQFRATREH.

One can recognise a tr-type G domain in the interval 8–277; the sequence is GKRRTFAIIS…GLTDWAPAPQ (270 aa). GTP-binding positions include 17–24, 85–89, and 139–142; these read SHPDAGKT, DTPGH, and NKLD.

It belongs to the TRAFAC class translation factor GTPase superfamily. Classic translation factor GTPase family. PrfC subfamily.

It localises to the cytoplasm. Its function is as follows. Increases the formation of ribosomal termination complexes and stimulates activities of RF-1 and RF-2. It binds guanine nucleotides and has strong preference for UGA stop codons. It may interact directly with the ribosome. The stimulation of RF-1 and RF-2 is significantly reduced by GTP and GDP, but not by GMP. This Aliivibrio fischeri (strain ATCC 700601 / ES114) (Vibrio fischeri) protein is Peptide chain release factor 3.